The primary structure comprises 258 residues: Snake venom serine protease 2 (258 aa).

The signal sequence occupies residues Met-1–Ala-18. Positions Gln-19–Leu-24 are excised as a propeptide. Residues Val-25–Ala-249 form the Peptidase S1 domain. 6 disulfides stabilise this stretch: Cys-31–Cys-163, Cys-50–Cys-66, Cys-98–Cys-256, Cys-142–Cys-210, Cys-174–Cys-189, and Cys-200–Cys-225. Asn-44 carries an N-linked (GlcNAc...) asparagine glycan. Active-site charge relay system residues include His-65 and Asp-110. Residues Asn-122 and Asn-185 are each glycosylated (N-linked (GlcNAc...) asparagine). The active-site Charge relay system is Ser-204.

The protein belongs to the peptidase S1 family. Snake venom subfamily. As to quaternary structure, monomer. Expressed by the venom gland.

It localises to the secreted. With respect to regulation, inhibited by PMSF at 2 mM concentration but not by EDTA. Snake venom serine protease that may act in the hemostasis system of the prey. Has weak fibrinogen clotting activity. Possesses amidolysis activity towards S-2251 (substrate for plasmin) but has no hydrolytic activity with S-2302 (plasma kallikrein substrate) or S-2238 (thrombin substrate). The sequence is that of Snake venom serine protease 2 from Protobothrops jerdonii (Jerdon's pitviper).